The primary structure comprises 250 residues: Flap endonuclease Xni (250 aa).

Aspartate 104 contacts Mg(2+). The 5'-3' exonuclease domain maps to 160–249 (VQPQQLTDFW…LQGNLQQLRL (90 aa)). Residues leucine 171, alanine 172, proline 180, valine 182, and isoleucine 185 each coordinate K(+). Residues 184 to 189 (GIGPKS) form an interaction with DNA region.

The protein belongs to the Xni family. It depends on Mg(2+) as a cofactor. K(+) serves as cofactor.

In terms of biological role, has flap endonuclease activity. During DNA replication, flap endonucleases cleave the 5'-overhanging flap structure that is generated by displacement synthesis when DNA polymerase encounters the 5'-end of a downstream Okazaki fragment. This is Flap endonuclease Xni from Sodalis glossinidius (strain morsitans).